The following is a 105-amino-acid chain: Large ribosomal subunit protein uL24 (105 aa).

The protein belongs to the universal ribosomal protein uL24 family. As to quaternary structure, part of the 50S ribosomal subunit.

One of two assembly initiator proteins, it binds directly to the 5'-end of the 23S rRNA, where it nucleates assembly of the 50S subunit. In terms of biological role, one of the proteins that surrounds the polypeptide exit tunnel on the outside of the subunit. The sequence is that of Large ribosomal subunit protein uL24 from Staphylococcus haemolyticus (strain JCSC1435).